Reading from the N-terminus, the 216-residue chain is Phosphatidylserine decarboxylase proenzyme (216 aa).

The Schiff-base intermediate with substrate; via pyruvic acid role is filled by serine 183. Serine 183 is modified (pyruvic acid (Ser); by autocatalysis).

The protein belongs to the phosphatidylserine decarboxylase family. PSD-A subfamily. In terms of assembly, heterodimer of a large membrane-associated beta subunit and a small pyruvoyl-containing alpha subunit. Requires pyruvate as cofactor. Post-translationally, is synthesized initially as an inactive proenzyme. Formation of the active enzyme involves a self-maturation process in which the active site pyruvoyl group is generated from an internal serine residue via an autocatalytic post-translational modification. Two non-identical subunits are generated from the proenzyme in this reaction, and the pyruvate is formed at the N-terminus of the alpha chain, which is derived from the carboxyl end of the proenzyme. The post-translation cleavage follows an unusual pathway, termed non-hydrolytic serinolysis, in which the side chain hydroxyl group of the serine supplies its oxygen atom to form the C-terminus of the beta chain, while the remainder of the serine residue undergoes an oxidative deamination to produce ammonia and the pyruvoyl prosthetic group on the alpha chain.

Its subcellular location is the cell membrane. It carries out the reaction a 1,2-diacyl-sn-glycero-3-phospho-L-serine + H(+) = a 1,2-diacyl-sn-glycero-3-phosphoethanolamine + CO2. It participates in phospholipid metabolism; phosphatidylethanolamine biosynthesis; phosphatidylethanolamine from CDP-diacylglycerol: step 2/2. Its function is as follows. Catalyzes the formation of phosphatidylethanolamine (PtdEtn) from phosphatidylserine (PtdSer). This Chlorobaculum tepidum (strain ATCC 49652 / DSM 12025 / NBRC 103806 / TLS) (Chlorobium tepidum) protein is Phosphatidylserine decarboxylase proenzyme.